The chain runs to 364 residues: Mitogen-activated protein kinase 11 (364 aa).

A Protein kinase domain is found at 24–308; sequence LQGLRPVGSG…AAEALAHAYF (285 aa). ATP-binding positions include 30–38 and Lys53; that span reads VGSGAYGSV. A nilotinib-binding site is contributed by Glu71. The active-site Proton acceptor is the Asp168. Thr180 is modified (phosphothreonine; by MAP2K3, MAP2K4 and MAP2K6). The TXY motif lies at 180 to 182; it reads TGY. Tyr182 bears the Phosphotyrosine; by MAP2K3, MAP2K4 and MAP2K6 mark. Residues 312–331 form a disordered region; it reads HDPDDEPEAEPYDESVEAKE. Positions 314-326 are enriched in acidic residues; the sequence is PDDEPEAEPYDES. A Phosphotyrosine; by ZAP70 modification is found at Tyr323.

It belongs to the protein kinase superfamily. CMGC Ser/Thr protein kinase family. MAP kinase subfamily. Interacts with HDAC3 and DUSP16. Mg(2+) is required as a cofactor. Post-translationally, dually phosphorylated on Thr-180 and Tyr-182 by MAP2K3/MKK3, MAP2K4/MKK4 and MAP2K6/MKK6, which activates the enzyme.

The protein localises to the cytoplasm. It is found in the nucleus. The catalysed reaction is L-seryl-[protein] + ATP = O-phospho-L-seryl-[protein] + ADP + H(+). It catalyses the reaction L-threonyl-[protein] + ATP = O-phospho-L-threonyl-[protein] + ADP + H(+). Its activity is regulated as follows. Activated by phosphorylation on threonine and tyrosine by MAP2K3/MKK3, MAP2K4/MKK4 and MAP2K6/MKK6. MAP2K3/MKK3 and MAP2K6/MKK6 are both essential for the activation of MAPK11 induced by environmental stress. HDAC3 interacts directly and selectively with MAPK11 to repress ATF2 transcriptional activity, and regulate TNF gene expression in LPS-stimulated cells. Inhibited by SB203580 and pyridinyl-imidazole related compounds. Functionally, serine/threonine kinase which acts as an essential component of the MAP kinase signal transduction pathway. MAPK11 is one of the four p38 MAPKs which play an important role in the cascades of cellular responses evoked by extracellular stimuli such as pro-inflammatory cytokines or physical stress leading to direct activation of transcription factors. Accordingly, p38 MAPKs phosphorylate a broad range of proteins and it has been estimated that they may have approximately 200 to 300 substrates each. MAPK11 functions are mostly redundant with those of MAPK14. Some of the targets are downstream kinases which are activated through phosphorylation and further phosphorylate additional targets. RPS6KA5/MSK1 and RPS6KA4/MSK2 can directly phosphorylate and activate transcription factors such as CREB1, ATF1, the NF-kappa-B isoform RELA/NFKB3, STAT1 and STAT3, but can also phosphorylate histone H3 and the nucleosomal protein HMGN1. RPS6KA5/MSK1 and RPS6KA4/MSK2 play important roles in the rapid induction of immediate-early genes in response to stress or mitogenic stimuli, either by inducing chromatin remodeling or by recruiting the transcription machinery. On the other hand, two other kinase targets, MAPKAPK2/MK2 and MAPKAPK3/MK3, participate in the control of gene expression mostly at the post-transcriptional level, by phosphorylating ZFP36 (tristetraprolin) and ELAVL1, and by regulating EEF2K, which is important for the elongation of mRNA during translation. MKNK1/MNK1 and MKNK2/MNK2, two other kinases activated by p38 MAPKs, regulate protein synthesis by phosphorylating the initiation factor EIF4E2. In the cytoplasm, the p38 MAPK pathway is an important regulator of protein turnover. For example, CFLAR is an inhibitor of TNF-induced apoptosis whose proteasome-mediated degradation is regulated by p38 MAPK phosphorylation. Ectodomain shedding of transmembrane proteins is regulated by p38 MAPKs as well. In response to inflammatory stimuli, p38 MAPKs phosphorylate the membrane-associated metalloprotease ADAM17. Such phosphorylation is required for ADAM17-mediated ectodomain shedding of TGF-alpha family ligands, which results in the activation of EGFR signaling and cell proliferation. Additional examples of p38 MAPK substrates are the FGFR1. FGFR1 can be translocated from the extracellular space into the cytosol and nucleus of target cells, and regulates processes such as rRNA synthesis and cell growth. FGFR1 translocation requires p38 MAPK activation. In the nucleus, many transcription factors are phosphorylated and activated by p38 MAPKs in response to different stimuli. Classical examples include ATF1, ATF2, ATF6, ELK1, PTPRH, DDIT3, TP53/p53 and MEF2C and MEF2A. The p38 MAPKs are emerging as important modulators of gene expression by regulating chromatin modifiers and remodelers. The promoters of several genes involved in the inflammatory response, such as IL6, IL8 and IL12B, display a p38 MAPK-dependent enrichment of histone H3 phosphorylation on 'Ser-10' (H3S10ph) in LPS-stimulated myeloid cells. This phosphorylation enhances the accessibility of the cryptic NF-kappa-B-binding sites marking promoters for increased NF-kappa-B recruitment. Phosphorylates methyltransferase DOT1L on 'Ser-834', 'Thr-900', 'Ser-902', 'Thr-984', 'Ser-1001', 'Ser-1009' and 'Ser-1104'. The chain is Mitogen-activated protein kinase 11 (Mapk11) from Mus musculus (Mouse).